Here is a 255-residue protein sequence, read N- to C-terminus: tRNA1(Val) (adenine(37)-N6)-methyltransferase (255 aa).

The protein belongs to the methyltransferase superfamily. tRNA (adenine-N(6)-)-methyltransferase family.

The protein resides in the cytoplasm. It carries out the reaction adenosine(37) in tRNA1(Val) + S-adenosyl-L-methionine = N(6)-methyladenosine(37) in tRNA1(Val) + S-adenosyl-L-homocysteine + H(+). Functionally, specifically methylates the adenine in position 37 of tRNA(1)(Val) (anticodon cmo5UAC). This chain is tRNA1(Val) (adenine(37)-N6)-methyltransferase, found in Porphyromonas gingivalis (strain ATCC 33277 / DSM 20709 / CIP 103683 / JCM 12257 / NCTC 11834 / 2561).